The chain runs to 451 residues: Exodeoxyribonuclease 7 large subunit (451 aa).

The protein belongs to the XseA family. Heterooligomer composed of large and small subunits.

The protein localises to the cytoplasm. The catalysed reaction is Exonucleolytic cleavage in either 5'- to 3'- or 3'- to 5'-direction to yield nucleoside 5'-phosphates.. Its function is as follows. Bidirectionally degrades single-stranded DNA into large acid-insoluble oligonucleotides, which are then degraded further into small acid-soluble oligonucleotides. This Neisseria gonorrhoeae (strain ATCC 700825 / FA 1090) protein is Exodeoxyribonuclease 7 large subunit.